The primary structure comprises 279 residues: Energy-coupling factor transporter ATP-binding protein EcfA1 (279 aa).

The ABC transporter domain maps to 5-240 (ITVNNLFFKY…GNRLISLGLD (236 aa)). 40–47 (GHNGSGKS) contacts ATP.

This sequence belongs to the ABC transporter superfamily. Energy-coupling factor EcfA family. Forms a stable energy-coupling factor (ECF) transporter complex composed of 2 membrane-embedded substrate-binding proteins (S component), 2 ATP-binding proteins (A component) and 2 transmembrane proteins (T component).

It is found in the cell membrane. Functionally, ATP-binding (A) component of a common energy-coupling factor (ECF) ABC-transporter complex. Unlike classic ABC transporters this ECF transporter provides the energy necessary to transport a number of different substrates. The protein is Energy-coupling factor transporter ATP-binding protein EcfA1 of Streptococcus agalactiae serotype Ia (strain ATCC 27591 / A909 / CDC SS700).